A 785-amino-acid chain; its full sequence is Probable serine protease Ga0098714_109514 (785 aa).

Basic and acidic residues-rich tracts occupy residues 470-481 and 491-501; these read LDHGKNGREGGR and DGPEHPNHYAD. Disordered regions lie at residues 470-503 and 608-629; these read LDHG…ADID and DGDA…EEVS.

Belongs to the peptidase S1 family.

Probably a dedicated protease for substrate gasdermin bGSDM; cleaves the bGSDM precursor, releasing the pore-forming moiety, which integrates into the membrane and triggers cell death. Involved in defense against bacteriophages. Expression of gasdermin bGSDM and this neighboring protease is toxic in E.coli on solid medium. This chain is Probable serine protease Ga0098714_109514, found in Bradyrhizobium tropiciagri.